A 263-amino-acid polypeptide reads, in one-letter code: Tryptophan synthase alpha chain (263 aa).

Residues glutamate 41 and aspartate 52 each act as proton acceptor in the active site.

Belongs to the TrpA family. In terms of assembly, tetramer of two alpha and two beta chains.

It catalyses the reaction (1S,2R)-1-C-(indol-3-yl)glycerol 3-phosphate + L-serine = D-glyceraldehyde 3-phosphate + L-tryptophan + H2O. The protein operates within amino-acid biosynthesis; L-tryptophan biosynthesis; L-tryptophan from chorismate: step 5/5. The alpha subunit is responsible for the aldol cleavage of indoleglycerol phosphate to indole and glyceraldehyde 3-phosphate. The protein is Tryptophan synthase alpha chain of Geobacillus sp. (strain WCH70).